We begin with the raw amino-acid sequence, 91 residues long: Small ribosomal subunit protein uS19 (91 aa).

Belongs to the universal ribosomal protein uS19 family.

Functionally, protein S19 forms a complex with S13 that binds strongly to the 16S ribosomal RNA. This Prochlorococcus marinus (strain MIT 9303) protein is Small ribosomal subunit protein uS19.